Reading from the N-terminus, the 634-residue chain is Extracellular metalloproteinase MEP (634 aa).

Positions 1–18 (MRGLLLAGALALPASVFA) are cleaved as a signal peptide. Residues 19 to 245 (HPAHQSYGLN…IHGVVDYVAE (227 aa)) constitute a propeptide that is removed on maturation. Position 429 (H429) interacts with Zn(2+). The active site involves E430. Residue H433 participates in Zn(2+) binding.

This sequence belongs to the peptidase M36 family. Zn(2+) serves as cofactor.

The protein localises to the secreted. In terms of biological role, secreted metalloproteinase that allows assimilation of proteinaceous substrates and probably acts as a virulence factor. The polypeptide is Extracellular metalloproteinase MEP (MEP) (Neosartorya fischeri (strain ATCC 1020 / DSM 3700 / CBS 544.65 / FGSC A1164 / JCM 1740 / NRRL 181 / WB 181) (Aspergillus fischerianus)).